A 710-amino-acid chain; its full sequence is Interferon-induced GTP-binding protein Mx2 (710 aa).

The interval 1–87 is disordered; it reads MSLSFRPLKY…RSKGPENNLY (87 aa). 2 stretches are compositionally biased toward polar residues: residues 39–50 and 58–79; these read QTMSPPQWQVEE and NNFS…QQRS. Residues 112–383 form the Dynamin-type G domain; the sequence is DLALPAIAVI…LIWHINKSLP (272 aa). The tract at residues 122-129 is G1 motif; that stretch reads GDQSSGKS. 122–129 is a GTP binding site; the sequence is GDQSSGKS. A G2 motif region spans residues 147–149; it reads ITR. A G3 motif region spans residues 221–224; sequence DLPG. GTP contacts are provided by residues 221–225 and 290–293; these read DLPGI and TKPD. The G4 motif stretch occupies residues 290–293; sequence TKPD. The G5 motif stretch occupies residues 322 to 325; it reads KCRG. A GED domain is found at 619 to 710; sequence IVEIGVHLNA…ALYEFPHFKG (92 aa).

The protein belongs to the TRAFAC class dynamin-like GTPase superfamily. Dynamin/Fzo/YdjA family.

Its subcellular location is the cytoplasm. The protein resides in the nucleus. Interferon-induced dynamin-like GTPase with antiviral activity against vesicular stomatitis virus (VSV). This Bubalus bubalis (Domestic water buffalo) protein is Interferon-induced GTP-binding protein Mx2 (MX2).